A 196-amino-acid chain; its full sequence is Signal peptidase complex catalytic subunit SEC11 (196 aa).

Over 1–14 the chain is Cytoplasmic; that stretch reads MLSSLSPYMANPRQ. A helical; Signal-anchor for type II membrane protein transmembrane segment spans residues 15 to 33; it reads TFTQVLNFALVLSTAFMLW. Topologically, residues 34–196 are lumenal; it reads KGLSVYTNSA…MGLMVILQRE (163 aa). Catalysis depends on charge relay system residues serine 53 and histidine 92. The interval 101–133 is disordered; it reads VPGKDKTKKGGKQDVEASPSSLESQKLLTKGDN. Residues 118–133 are compositionally biased toward polar residues; sequence SPSSLESQKLLTKGDN. The N-linked (GlcNAc...) asparagine glycan is linked to asparagine 134. The active-site Charge relay system is aspartate 138. The C-terminal short (CTS) helix stretch occupies residues 182 to 193; the sequence is VLLGFMGLMVIL.

The protein belongs to the peptidase S26B family. Component of the signal peptidase complex (SPC) composed of a catalytic subunit SEC11 and three accessory subunits SPC1, SPC2 and SPC3. The complex induces a local thinning of the ER membrane which is used to measure the length of the signal peptide (SP) h-region of protein substrates. This ensures the selectivity of the complex towards h-regions shorter than 18-20 amino acids. SPC associates with the translocon complex.

The protein localises to the endoplasmic reticulum membrane. The enzyme catalyses Cleavage of hydrophobic, N-terminal signal or leader sequences from secreted and periplasmic proteins.. Functionally, catalytic component of the signal peptidase complex (SPC) which catalyzes the cleavage of N-terminal signal sequences from nascent proteins as they are translocated into the lumen of the endoplasmic reticulum. Specifically cleaves N-terminal signal peptides that contain a hydrophobic alpha-helix (h-region) shorter than 18-20 amino acids. The polypeptide is Signal peptidase complex catalytic subunit SEC11 (SEC11) (Blastomyces gilchristii (strain SLH14081) (Blastomyces dermatitidis)).